The sequence spans 452 residues: Pup--protein ligase (452 aa).

Residue E9 participates in Mg(2+) binding. R53 provides a ligand contact to ATP. Y55 is a Mg(2+) binding site. D57 acts as the Proton acceptor in catalysis. E63 lines the Mg(2+) pocket. ATP is bound by residues T66 and W419.

The protein belongs to the Pup ligase/Pup deamidase family. Pup-conjugating enzyme subfamily.

It carries out the reaction ATP + [prokaryotic ubiquitin-like protein]-L-glutamate + [protein]-L-lysine = ADP + phosphate + N(6)-([prokaryotic ubiquitin-like protein]-gamma-L-glutamyl)-[protein]-L-lysine.. It functions in the pathway protein degradation; proteasomal Pup-dependent pathway. Its pathway is protein modification; protein pupylation. In terms of biological role, catalyzes the covalent attachment of the prokaryotic ubiquitin-like protein modifier Pup to the proteasomal substrate proteins, thereby targeting them for proteasomal degradation. This tagging system is termed pupylation. The ligation reaction involves the side-chain carboxylate of the C-terminal glutamate of Pup and the side-chain amino group of a substrate lysine. The chain is Pup--protein ligase from Parafrankia sp. (strain EAN1pec).